An 88-amino-acid polypeptide reads, in one-letter code: Mitochondrial import inner membrane translocase subunit TIM8 (88 aa).

A Twin CX3C motif motif is present at residues 44-70; that stretch reads CFKKCNKDKPITSATLDGQEEACLKNC. 2 disulfide bridges follow: Cys44-Cys70 and Cys48-Cys66.

This sequence belongs to the small Tim family. As to quaternary structure, heterohexamer; composed of 3 copies of TIM8 and 3 copies of TIM13, named soluble 70 kDa complex. Associates with the TIM22 complex, whose core is composed of TIM22 and TIM54. Interacts with the transmembrane regions of multi-pass transmembrane proteins in transit.

The protein resides in the mitochondrion inner membrane. Functionally, mitochondrial intermembrane chaperone that participates in the import and insertion of some multi-pass transmembrane proteins into the mitochondrial inner membrane. Also required for the transfer of beta-barrel precursors from the TOM complex to the sorting and assembly machinery (SAM complex) of the outer membrane. Acts as a chaperone-like protein that protects the hydrophobic precursors from aggregation and guide them through the mitochondrial intermembrane space. The TIM8-TIM13 complex is non essential and only mediates the import of few proteins, while the predominant TIM9-TIM10 70 kDa complex is crucial and mediates the import of much more proteins. The chain is Mitochondrial import inner membrane translocase subunit TIM8 (TIM8) from Candida albicans (strain SC5314 / ATCC MYA-2876) (Yeast).